Here is a 652-residue protein sequence, read N- to C-terminus: MSQTHKHAIPANIADRCLINPEQYETKYKQSINDPDTFWGEQGKILDWITPYQKVKNTSFAPGNVSIKWYEDGTLNLAANCLDRHLQENGDRTAIIWEGDDASQSKHISYRELHRDVCRFANTLLDLGIKKGDVVAIYMPMVPEAAVAMLACARIGAVHSVIFGGFSPEAIAGRIIDSSSRLVITADEGVRAGRSIPLKKNVDDALKNPNVTSVEHVIVLKRTGNDIDWQEGRDLWWRDLIEKASPEHQPEAMNAEDPLFILYTSGSTGKPKGVLHTTGGYLVYAATTFKYVFDYHPGDIYWCTADVGWVTGHSYLLYGPLACGATTLMFEGVPNWPTPARMCQVVDKHQVNILYTAPTAIRALMAEGDKAIEGTDRSSLRILGSVGEPINPEAWEWYWKKIGKEKCPVVDTWWQTETGGFMITPLPGAIELKAGSATRPFFGVQPALVDNEGHPQEGATEGNLVITDSWPGQARTLFGDHERFEQTYFSTFKNMYFSGDGARRDEDGYYWITGRVDDVLNVSGHRLGTAEIESALVAHPKIAEAAVVGIPHAIKGQAIYAYVTLNHGEEPSPELYAEVRNWVRKEIGPLATPDVLHWTDSLPKTRSGKIMRRILRKIAAGDTSNLGDTSTLADPGVVEKLLEEKQAIAMPS.

CoA is bound by residues 191–194 (RAGR), threonine 311, and asparagine 335. ATP contacts are provided by residues 387-389 (GEP), 411-416 (DTWWQT), aspartate 500, and arginine 515. Residue serine 523 coordinates CoA. Arginine 526 is an ATP binding site. 3 residues coordinate Mg(2+): valine 537, histidine 539, and isoleucine 542. Arginine 584 is a binding site for CoA. An N6-acetyllysine modification is found at lysine 609.

It belongs to the ATP-dependent AMP-binding enzyme family. Requires Mg(2+) as cofactor. Acetylated. Deacetylation by the SIR2-homolog deacetylase activates the enzyme.

It carries out the reaction acetate + ATP + CoA = acetyl-CoA + AMP + diphosphate. Functionally, catalyzes the conversion of acetate into acetyl-CoA (AcCoA), an essential intermediate at the junction of anabolic and catabolic pathways. Acs undergoes a two-step reaction. In the first half reaction, Acs combines acetate with ATP to form acetyl-adenylate (AcAMP) intermediate. In the second half reaction, it can then transfer the acetyl group from AcAMP to the sulfhydryl group of CoA, forming the product AcCoA. In terms of biological role, enables the cell to use acetate during aerobic growth to generate energy via the TCA cycle, and biosynthetic compounds via the glyoxylate shunt. Acetylates CheY, the response regulator involved in flagellar movement and chemotaxis. The polypeptide is Acetyl-coenzyme A synthetase (Salmonella typhi).